A 496-amino-acid polypeptide reads, in one-letter code: Amino-acid acetyltransferase, mitochondrial (496 aa).

The N-acetyltransferase domain maps to 333–493 (YHGTDCLTNG…LDVIDSIQPT (161 aa)).

It belongs to the acetyltransferase family.

It is found in the mitochondrion. It catalyses the reaction L-glutamate + acetyl-CoA = N-acetyl-L-glutamate + CoA + H(+). It participates in amino-acid biosynthesis; L-arginine biosynthesis; N(2)-acetyl-L-ornithine from L-glutamate: step 1/4. Its function is as follows. N-acetylglutamate synthase involved in arginine biosynthesis. The polypeptide is Amino-acid acetyltransferase, mitochondrial (arg2) (Schizosaccharomyces japonicus (strain yFS275 / FY16936) (Fission yeast)).